Reading from the N-terminus, the 244-residue chain is Ribonuclease PH (244 aa).

Residues arginine 90 and 128–130 (GTR) each bind phosphate.

Belongs to the RNase PH family. Homohexameric ring arranged as a trimer of dimers.

It carries out the reaction tRNA(n+1) + phosphate = tRNA(n) + a ribonucleoside 5'-diphosphate. Phosphorolytic 3'-5' exoribonuclease that plays an important role in tRNA 3'-end maturation. Removes nucleotide residues following the 3'-CCA terminus of tRNAs; can also add nucleotides to the ends of RNA molecules by using nucleoside diphosphates as substrates, but this may not be physiologically important. Probably plays a role in initiation of 16S rRNA degradation (leading to ribosome degradation) during starvation. This is Ribonuclease PH from Prochlorococcus marinus (strain MIT 9313).